Consider the following 197-residue polypeptide: Holliday junction branch migration complex subunit RuvA (197 aa).

The interval 1-64 is domain I; it reads MIALLRGLVV…EDVLALYGFL (64 aa). The tract at residues 65–143 is domain II; sequence TQDEKALFEK…AATGEEPGAP (79 aa). Positions 144–153 are flexible linker; sequence AAEALSPIDQ. Residues 153–197 are domain III; the sequence is QDVLSALLNLGCARPQAEAAVRKAKAAGASLDFEPLFRRALELVR.

It belongs to the RuvA family. In terms of assembly, homotetramer. Forms an RuvA(8)-RuvB(12)-Holliday junction (HJ) complex. HJ DNA is sandwiched between 2 RuvA tetramers; dsDNA enters through RuvA and exits via RuvB. An RuvB hexamer assembles on each DNA strand where it exits the tetramer. Each RuvB hexamer is contacted by two RuvA subunits (via domain III) on 2 adjacent RuvB subunits; this complex drives branch migration. In the full resolvosome a probable DNA-RuvA(4)-RuvB(12)-RuvC(2) complex forms which resolves the HJ.

It localises to the cytoplasm. Functionally, the RuvA-RuvB-RuvC complex processes Holliday junction (HJ) DNA during genetic recombination and DNA repair, while the RuvA-RuvB complex plays an important role in the rescue of blocked DNA replication forks via replication fork reversal (RFR). RuvA specifically binds to HJ cruciform DNA, conferring on it an open structure. The RuvB hexamer acts as an ATP-dependent pump, pulling dsDNA into and through the RuvAB complex. HJ branch migration allows RuvC to scan DNA until it finds its consensus sequence, where it cleaves and resolves the cruciform DNA. The sequence is that of Holliday junction branch migration complex subunit RuvA from Solibacter usitatus (strain Ellin6076).